The chain runs to 507 residues: Chromosomal replication initiator protein DnaA (507 aa).

The interval 1-112 (MTDDPGSGFT…PATDEADDTT (112 aa)) is domain I, interacts with DnaA modulators. Positions 99–155 (RIAPPATDEADDTTVPPSENPATTSPDTTTDNDEIDDSAAARGDNQHSWPSYFTERP) are disordered. A compositionally biased stretch (polar residues) spans 113–127 (VPPSENPATTSPDTT). The tract at residues 113 to 166 (VPPSENPATTSPDTTTDNDEIDDSAAARGDNQHSWPSYFTERPHNTDSATAGVT) is domain II. The interval 167-383 (SLNRRYTFDT…GALIRVTAFA (217 aa)) is domain III, AAA+ region. Gly-211, Gly-213, Lys-214, and Thr-215 together coordinate ATP. A domain IV, binds dsDNA region spans residues 384–507 (SLNKTPIDKA…TTRIRQRSKR (124 aa)).

The protein belongs to the DnaA family. As to quaternary structure, oligomerizes as a right-handed, spiral filament on DNA at oriC.

Its subcellular location is the cytoplasm. Functionally, plays an essential role in the initiation and regulation of chromosomal replication. ATP-DnaA binds to the origin of replication (oriC) to initiate formation of the DNA replication initiation complex once per cell cycle. Binds the DnaA box (a 9 base pair repeat at the origin) and separates the double-stranded (ds)DNA. Forms a right-handed helical filament on oriC DNA; dsDNA binds to the exterior of the filament while single-stranded (ss)DNA is stabiized in the filament's interior. The ATP-DnaA-oriC complex binds and stabilizes one strand of the AT-rich DNA unwinding element (DUE), permitting loading of DNA polymerase. After initiation quickly degrades to an ADP-DnaA complex that is not apt for DNA replication. Binds acidic phospholipids. In Mycobacterium tuberculosis (strain ATCC 25177 / H37Ra), this protein is Chromosomal replication initiator protein DnaA.